Consider the following 90-residue polypeptide: Small ribosomal subunit protein bS16 (90 aa).

Belongs to the bacterial ribosomal protein bS16 family.

The polypeptide is Small ribosomal subunit protein bS16 (Geobacillus thermodenitrificans (strain NG80-2)).